Consider the following 435-residue polypeptide: 3-ketoacyl-CoA thiolase (435 aa).

Catalysis depends on C98, which acts as the Acyl-thioester intermediate. Active-site proton acceptor residues include H391 and C421.

It belongs to the thiolase-like superfamily. Thiolase family. In terms of assembly, heterotetramer of two alpha chains (FadJ) and two beta chains (FadI).

It is found in the cytoplasm. The enzyme catalyses an acyl-CoA + acetyl-CoA = a 3-oxoacyl-CoA + CoA. It participates in lipid metabolism; fatty acid beta-oxidation. In terms of biological role, catalyzes the final step of fatty acid oxidation in which acetyl-CoA is released and the CoA ester of a fatty acid two carbons shorter is formed. This is 3-ketoacyl-CoA thiolase from Vibrio cholerae serotype O1 (strain ATCC 39541 / Classical Ogawa 395 / O395).